Here is a 130-residue protein sequence, read N- to C-terminus: MATLRSFVLVDNGGTGDVTVVPVSNANGVAEWLSNNSRSQAYRVTASYRASGADKRKYTIKLEVPKIVTQVVNGVELPVSAWKAYASIDLTIPIFAATDDVTVISKSLAGLFKVGNPIADAISSQSGFYA.

The tract at residues 31–104 (EWLSNNSRSQ…FAATDDVTVI (74 aa)) is viral RNA-binding.

This sequence belongs to the Leviviricetes capsid protein family. Homodimer. The capsid proteins form dimers that assemble by group of 5. Twelve such pentamers are linked together with free dimers. The homodimers binds to the viral RNA via an operator hairpin, but also to many other RNA sequences in the viral genome; this interaction probably shifts the virus from the replicative to the assembly phase and ensures specific encapsidation of the viral genome.

Its subcellular location is the virion. Functionally, capsid protein self-assembles to form an icosahedral capsid with a T=3 symmetry, about 26 nm in diameter, and consisting of 89 capsid proteins dimers (178 capsid proteins). Involved in viral genome encapsidation through the interaction between a capsid protein dimer and the multiple packaging signals present in the RNA genome. The capsid also contains 1 copy of the A2 maturation protein. Its function is as follows. Acts as a translational repressor of viral replicase synthesis late in infection. This latter function is the result of capsid protein interaction with an RNA hairpin which contains the replicase ribosome-binding site. The protein is Capsid protein of Escherichia coli (Bacteriophage JP34).